A 101-amino-acid chain; its full sequence is Small ribosomal subunit protein uS14 (101 aa).

This sequence belongs to the universal ribosomal protein uS14 family. Part of the 30S ribosomal subunit. Contacts proteins S3 and S10.

Its function is as follows. Binds 16S rRNA, required for the assembly of 30S particles and may also be responsible for determining the conformation of the 16S rRNA at the A site. This is Small ribosomal subunit protein uS14 from Cupriavidus pinatubonensis (strain JMP 134 / LMG 1197) (Cupriavidus necator (strain JMP 134)).